Here is a 228-residue protein sequence, read N- to C-terminus: Probable U3 small nucleolar RNA-associated protein 11 (228 aa).

Disordered stretches follow at residues 1–23 and 192–211; these read MSSL…EARK and SMQK…DDEL. Positions 12 to 23 are enriched in basic and acidic residues; sequence AHKERSQPEARK.

It belongs to the UTP11 family. In terms of assembly, component of the ribosomal small subunit (SSU) processome.

It is found in the nucleus. It localises to the nucleolus. Functionally, involved in nucleolar processing of pre-18S ribosomal RNA. The chain is Probable U3 small nucleolar RNA-associated protein 11 from Arabidopsis thaliana (Mouse-ear cress).